We begin with the raw amino-acid sequence, 95 residues long: MDPHQIIIRPVISEKSYNLIENEGQYTFEVDRRANKNQIKKAVEEAFDVKVKKVNTVNVKSKPKRQGFTRGRTSTWKKAVVKLAEGDRIELFEGV.

This sequence belongs to the universal ribosomal protein uL23 family. In terms of assembly, part of the 50S ribosomal subunit. Contacts protein L29, and trigger factor when it is bound to the ribosome.

In terms of biological role, one of the early assembly proteins it binds 23S rRNA. One of the proteins that surrounds the polypeptide exit tunnel on the outside of the ribosome. Forms the main docking site for trigger factor binding to the ribosome. The protein is Large ribosomal subunit protein uL23 of Rubrobacter xylanophilus (strain DSM 9941 / JCM 11954 / NBRC 16129 / PRD-1).